The chain runs to 550 residues: Methionine--tRNA ligase (550 aa).

A 'HIGH' region motif is present at residues 10 to 22 (LPYPNNSSPHLGN). Residues 336 to 340 (KFSKS) carry the 'KMSKS' region motif. K339 provides a ligand contact to ATP.

The protein belongs to the class-I aminoacyl-tRNA synthetase family.

It carries out the reaction tRNA(Met) + L-methionine + ATP = L-methionyl-tRNA(Met) + AMP + diphosphate. This is Methionine--tRNA ligase (MARS) from Acanthamoeba polyphaga mimivirus (APMV).